The following is a 141-amino-acid chain: Nucleoside diphosphate kinase (141 aa).

ATP is bound by residues Lys-11, Phe-59, Arg-87, Thr-93, Arg-104, and Asn-114. His-117 acts as the Pros-phosphohistidine intermediate in catalysis.

This sequence belongs to the NDK family. Homotetramer. The cofactor is Mg(2+).

The protein localises to the cytoplasm. The enzyme catalyses a 2'-deoxyribonucleoside 5'-diphosphate + ATP = a 2'-deoxyribonucleoside 5'-triphosphate + ADP. The catalysed reaction is a ribonucleoside 5'-diphosphate + ATP = a ribonucleoside 5'-triphosphate + ADP. In terms of biological role, major role in the synthesis of nucleoside triphosphates other than ATP. The ATP gamma phosphate is transferred to the NDP beta phosphate via a ping-pong mechanism, using a phosphorylated active-site intermediate. This chain is Nucleoside diphosphate kinase, found in Herminiimonas arsenicoxydans.